An 82-amino-acid polypeptide reads, in one-letter code: RNA-binding protein Hfq (82 aa).

Residues 9–69 (DHFLNQLRKE…ISTFSPARNV (61 aa)) enclose the Sm domain.

It belongs to the Hfq family. Homohexamer.

Functionally, RNA chaperone that binds small regulatory RNA (sRNAs) and mRNAs to facilitate mRNA translational regulation in response to envelope stress, environmental stress and changes in metabolite concentrations. Also binds with high specificity to tRNAs. In Exiguobacterium sp. (strain ATCC BAA-1283 / AT1b), this protein is RNA-binding protein Hfq.